A 215-amino-acid polypeptide reads, in one-letter code: Negative modulator of initiation of replication (215 aa).

A disordered region spans residues 71 to 93 (AETPKPSSEQEIRTPARKQSTQS). The interval 181–187 (NTNSGRK) is interaction with DNA.

This sequence belongs to the SeqA family. In terms of assembly, homodimer. Polymerizes to form helical filaments.

It localises to the cytoplasm. Functionally, negative regulator of replication initiation, which contributes to regulation of DNA replication and ensures that replication initiation occurs exactly once per chromosome per cell cycle. Binds to pairs of hemimethylated GATC sequences in the oriC region, thus preventing assembly of replication proteins and re-initiation at newly replicated origins. Repression is relieved when the region becomes fully methylated. The protein is Negative modulator of initiation of replication of Mannheimia succiniciproducens (strain KCTC 0769BP / MBEL55E).